A 284-amino-acid polypeptide reads, in one-letter code: MGQIIDGEKLAKEIQERVTTEVAELAKIDKKPGLAVVLVGDNQASRTYVRNKQKRTEEAGMKSVLIELPETVSEEKLLEVVEELNTDDTIHGILVQLPLPKHISEEKVIDTISYDKDVDGFHPVNVGNLFIGKDSFVPCTPAGIIELIKSTGTQIEGKRAVVIGRSNIVGKPVAQLLLNENATVTIAHSRTKNLPEVAKEADILVVATGLAKFVKKEYIKPGAIVIDVGMDRDENNKLCGDVDFDDVIEEAGFITPVPGGVGPMTITMLLANTLKAAKRIWKMN.

NADP(+) contacts are provided by residues 164-166 (GRS) and serine 189.

The protein belongs to the tetrahydrofolate dehydrogenase/cyclohydrolase family. In terms of assembly, homodimer.

The catalysed reaction is (6R)-5,10-methylene-5,6,7,8-tetrahydrofolate + NADP(+) = (6R)-5,10-methenyltetrahydrofolate + NADPH. It catalyses the reaction (6R)-5,10-methenyltetrahydrofolate + H2O = (6R)-10-formyltetrahydrofolate + H(+). Its pathway is one-carbon metabolism; tetrahydrofolate interconversion. Its function is as follows. Catalyzes the oxidation of 5,10-methylenetetrahydrofolate to 5,10-methenyltetrahydrofolate and then the hydrolysis of 5,10-methenyltetrahydrofolate to 10-formyltetrahydrofolate. In Listeria welshimeri serovar 6b (strain ATCC 35897 / DSM 20650 / CCUG 15529 / CIP 8149 / NCTC 11857 / SLCC 5334 / V8), this protein is Bifunctional protein FolD.